A 364-amino-acid chain; its full sequence is tRNA 2-selenouridine synthase (364 aa).

One can recognise a Rhodanese domain in the interval 14–137 (LLADTPLIDV…LRQTAIQATW (124 aa)). Cys97 functions as the S-selanylcysteine intermediate in the catalytic mechanism. Gly149 lines the (2E)-geranyl diphosphate pocket.

This sequence belongs to the SelU family. In terms of assembly, monomer.

The catalysed reaction is 5-methylaminomethyl-2-thiouridine(34) in tRNA + selenophosphate + (2E)-geranyl diphosphate + H2O + H(+) = 5-methylaminomethyl-2-selenouridine(34) in tRNA + (2E)-thiogeraniol + phosphate + diphosphate. The enzyme catalyses 5-methylaminomethyl-2-thiouridine(34) in tRNA + (2E)-geranyl diphosphate = 5-methylaminomethyl-S-(2E)-geranyl-thiouridine(34) in tRNA + diphosphate. It carries out the reaction 5-methylaminomethyl-S-(2E)-geranyl-thiouridine(34) in tRNA + selenophosphate + H(+) = 5-methylaminomethyl-2-(Se-phospho)selenouridine(34) in tRNA + (2E)-thiogeraniol. It catalyses the reaction 5-methylaminomethyl-2-(Se-phospho)selenouridine(34) in tRNA + H2O = 5-methylaminomethyl-2-selenouridine(34) in tRNA + phosphate. Involved in the post-transcriptional modification of the uridine at the wobble position (U34) of tRNA(Lys), tRNA(Glu) and tRNA(Gln). Catalyzes the conversion of 2-thiouridine (S2U-RNA) to 2-selenouridine (Se2U-RNA). Acts in a two-step process involving geranylation of 2-thiouridine (S2U) to S-geranyl-2-thiouridine (geS2U) and subsequent selenation of the latter derivative to 2-selenouridine (Se2U) in the tRNA chain. The chain is tRNA 2-selenouridine synthase from Salmonella typhimurium (strain LT2 / SGSC1412 / ATCC 700720).